Reading from the N-terminus, the 295-residue chain is Glutamyl-Q tRNA(Asp) synthetase (295 aa).

Residues 6–10 (RFAPS) and Glu-42 each bind L-glutamate. The short motif at 9–19 (PSPTGAMHLGN) is the 'HIGH' region element. Cys-93, Cys-95, Tyr-118, and Cys-122 together coordinate Zn(2+). L-glutamate-binding residues include Tyr-177 and Arg-195. The short motif at 233–237 (RLAKR) is the 'KMSKS' region element. Lys-236 serves as a coordination point for ATP.

It belongs to the class-I aminoacyl-tRNA synthetase family. GluQ subfamily. Zn(2+) serves as cofactor.

In terms of biological role, catalyzes the tRNA-independent activation of glutamate in presence of ATP and the subsequent transfer of glutamate onto a tRNA(Asp). Glutamate is transferred on the 2-amino-5-(4,5-dihydroxy-2-cyclopenten-1-yl) moiety of the queuosine in the wobble position of the QUC anticodon. This is Glutamyl-Q tRNA(Asp) synthetase from Deinococcus radiodurans (strain ATCC 13939 / DSM 20539 / JCM 16871 / CCUG 27074 / LMG 4051 / NBRC 15346 / NCIMB 9279 / VKM B-1422 / R1).